A 102-amino-acid polypeptide reads, in one-letter code: Large ribosomal subunit protein uL24 (102 aa).

It belongs to the universal ribosomal protein uL24 family. As to quaternary structure, part of the 50S ribosomal subunit.

Its function is as follows. One of two assembly initiator proteins, it binds directly to the 5'-end of the 23S rRNA, where it nucleates assembly of the 50S subunit. One of the proteins that surrounds the polypeptide exit tunnel on the outside of the subunit. This chain is Large ribosomal subunit protein uL24, found in Cupriavidus necator (strain ATCC 17699 / DSM 428 / KCTC 22496 / NCIMB 10442 / H16 / Stanier 337) (Ralstonia eutropha).